Consider the following 83-residue polypeptide: Parvalbumin beta 3 (83 aa).

2 EF-hand domains span residues 13 to 48 (KSND…FSAG) and 52 to 83 (LTAG…LVKA). 11 residues coordinate Ca(2+): Asp26, Asp28, Ser30, Phe32, Glu34, Glu37, Asp65, Asp67, Asp69, Met71, and Glu76.

It belongs to the parvalbumin family.

Its function is as follows. In muscle, parvalbumin is thought to be involved in relaxation after contraction. It binds two calcium ions. The sequence is that of Parvalbumin beta 3 from Macruronus novaezelandiae (Blue grenadier).